Here is a 432-residue protein sequence, read N- to C-terminus: MYYCISFTHKNTDIALREKLSFSNEAKKSEFLKIISTHENIEECLVISTCNRVEIVAFVKMACAEFIVKSLALLCDVDKDILLEKADIFEDSGAIHHLFSVASSLDSLVVGETQIAGQLKDAFAFAVKNNFCGVHLSRAVHSAFKCAAKVRNETQISKNSISVASVAVAKAKELADLTQKKAVVIGAGEMGELAAKHLIAAGAKVIILNRDLQKAKDLCERLGVLSEYDSLENLKKYLNQYEFFFSATNAPNAIITNSLVEELSYKRYFFDIAVPRDIDINENENISVFAVDDLEIVVQKNLALREQEARMAYGIIGRETSEFFRYLNDLALMPIIKAIRLQAKEYADKQLEIALKKGYLKKSDKEEARKLIHQVFKAFLHTPTVNLKHLQGKMQSDTVINAMRYVFDLQNNLEGLNQYKCEFDMENNDEIY.

Substrate-binding positions include 49–52 (TCNR), S107, 112–114 (ETQ), and Q118. The active-site Nucleophile is C50. 186–191 (GAGEMG) contributes to the NADP(+) binding site.

The protein belongs to the glutamyl-tRNA reductase family. As to quaternary structure, homodimer.

The catalysed reaction is (S)-4-amino-5-oxopentanoate + tRNA(Glu) + NADP(+) = L-glutamyl-tRNA(Glu) + NADPH + H(+). It participates in porphyrin-containing compound metabolism; protoporphyrin-IX biosynthesis; 5-aminolevulinate from L-glutamyl-tRNA(Glu): step 1/2. Its function is as follows. Catalyzes the NADPH-dependent reduction of glutamyl-tRNA(Glu) to glutamate 1-semialdehyde (GSA). This Campylobacter jejuni subsp. jejuni serotype O:23/36 (strain 81-176) protein is Glutamyl-tRNA reductase.